A 592-amino-acid chain; its full sequence is Probable 6-phosphofructo-2-kinase C222.13c (592 aa).

Residues methionine 1 to valine 80 are disordered. Residues serine 57–proline 66 show a composition bias toward basic and acidic residues. Glycine 150–serine 157 is a binding site for ATP. Active-site residues include aspartate 235 and cysteine 266. Arginine 300 serves as a coordination point for beta-D-fructose 6-phosphate. Catalysis depends on histidine 527, which acts as the Proton donor.

It localises to the cytoplasm. The protein localises to the nucleus. It carries out the reaction beta-D-fructose 6-phosphate + ATP = beta-D-fructose 2,6-bisphosphate + ADP + H(+). Functionally, synthesis of fructose 2,6-bisphosphate. The sequence is that of Probable 6-phosphofructo-2-kinase C222.13c from Schizosaccharomyces pombe (strain 972 / ATCC 24843) (Fission yeast).